The sequence spans 159 residues: Cyclic pyranopterin monophosphate synthase (159 aa).

Substrate is bound by residues Leu-76–His-78 and Met-114–Glu-115. Asp-129 is an active-site residue.

This sequence belongs to the MoaC family. Homohexamer; trimer of dimers.

It carries out the reaction (8S)-3',8-cyclo-7,8-dihydroguanosine 5'-triphosphate = cyclic pyranopterin phosphate + diphosphate. The protein operates within cofactor biosynthesis; molybdopterin biosynthesis. Its function is as follows. Catalyzes the conversion of (8S)-3',8-cyclo-7,8-dihydroguanosine 5'-triphosphate to cyclic pyranopterin monophosphate (cPMP). The polypeptide is Cyclic pyranopterin monophosphate synthase (Shewanella oneidensis (strain ATCC 700550 / JCM 31522 / CIP 106686 / LMG 19005 / NCIMB 14063 / MR-1)).